Here is a 529-residue protein sequence, read N- to C-terminus: Auxin response factor 13 (529 aa).

The tract at residues 1 to 22 (MARPPAATAPPPPPPPPPPPPP) is disordered. Residues 7-22 (ATAPPPPPPPPPPPPP) are compositionally biased toward pro residues. A DNA-binding region (TF-B3) is located at residues 128–234 (YAKQLTQSDA…KLLVGVRRAA (107 aa)). Disordered regions lie at residues 443 to 462 (IVTP…PLSA) and 497 to 529 (PEGV…GARL). Positions 444–461 (VTPQNGSPPDNPVNTPLS) are enriched in polar residues. A compositionally biased stretch (acidic residues) spans 499–510 (GVDDETATEEAS). Residues 511 to 523 (DTSLPDSLTNGHN) show a composition bias toward polar residues.

Belongs to the ARF family. As to quaternary structure, homo and heterodimers. In terms of tissue distribution, expressed in roots, culms, leaves and young panicles.

The protein resides in the nucleus. In terms of biological role, auxin response factors (ARFs) are transcriptional factors that bind specifically to the DNA sequence 5'-TGTCTC-3' found in the auxin-responsive promoter elements (AuxREs). The sequence is that of Auxin response factor 13 (ARF13) from Oryza sativa subsp. japonica (Rice).